Reading from the N-terminus, the 1059-residue chain is Isoleucine--tRNA ligase (1059 aa).

Positions 47 to 57 match the 'HIGH' region motif; that stretch reads PYTSGQMHLGT. The 'KMSKS' region motif lies at 606-610; it reads KMSKS. An ATP-binding site is contributed by lysine 609.

The protein belongs to the class-I aminoacyl-tRNA synthetase family. IleS type 2 subfamily. In terms of assembly, monomer. Zn(2+) serves as cofactor.

It is found in the cytoplasm. It carries out the reaction tRNA(Ile) + L-isoleucine + ATP = L-isoleucyl-tRNA(Ile) + AMP + diphosphate. Its function is as follows. Catalyzes the attachment of isoleucine to tRNA(Ile). As IleRS can inadvertently accommodate and process structurally similar amino acids such as valine, to avoid such errors it has two additional distinct tRNA(Ile)-dependent editing activities. One activity is designated as 'pretransfer' editing and involves the hydrolysis of activated Val-AMP. The other activity is designated 'posttransfer' editing and involves deacylation of mischarged Val-tRNA(Ile). The polypeptide is Isoleucine--tRNA ligase (Haloquadratum walsbyi (strain DSM 16790 / HBSQ001)).